The primary structure comprises 204 residues: dITP/XTP pyrophosphatase (204 aa).

8–13 (SNNAKK) contacts substrate. Mg(2+)-binding residues include Glu43 and Asp72. Residue Asp72 is the Proton acceptor of the active site. Residues Ser73, 155-158 (FGYD), Lys180, and 185-186 (HR) contribute to the substrate site.

The protein belongs to the HAM1 NTPase family. In terms of assembly, homodimer. Requires Mg(2+) as cofactor.

The catalysed reaction is XTP + H2O = XMP + diphosphate + H(+). The enzyme catalyses dITP + H2O = dIMP + diphosphate + H(+). It catalyses the reaction ITP + H2O = IMP + diphosphate + H(+). Pyrophosphatase that catalyzes the hydrolysis of nucleoside triphosphates to their monophosphate derivatives, with a high preference for the non-canonical purine nucleotides XTP (xanthosine triphosphate), dITP (deoxyinosine triphosphate) and ITP. Seems to function as a house-cleaning enzyme that removes non-canonical purine nucleotides from the nucleotide pool, thus preventing their incorporation into DNA/RNA and avoiding chromosomal lesions. The polypeptide is dITP/XTP pyrophosphatase (Cutibacterium acnes (strain DSM 16379 / KPA171202) (Propionibacterium acnes)).